A 265-amino-acid chain; its full sequence is Short-chain dehydrogenase/reductase GME11373 (265 aa).

Residues I26, D72, N99, and R132 each contribute to the NADP(+) site. Residues S148 and S149 each act as proton donor in the active site. Y163, K167, and T198 together coordinate NADP(+). Residue Y163 is the Proton acceptor of the active site. K167 acts as the Lowers pKa of active site Tyr in catalysis.

This sequence belongs to the short-chain dehydrogenases/reductases (SDR) family.

It functions in the pathway secondary metabolite biosynthesis. Its function is as follows. Short-chain dehydrogenase/reductase; part of the gene cluster that mediates the biosynthesis of dibenzodioxocinones such as pestalotiollide B, a novel class of inhibitors against cholesterol ester transfer protein (CEPT). The biosynthesis initiates from condensation of acetate and malonate units catalyzed by the non-reducing PKS pks8/GME11356. Pks8/GME11356 lacks a thioesterase (TE) domain, which is important to the cyclizing of the third ring of atrochrysone carboxylic acid, and the esterase GME11355 might play the role of TE and catalyzes the cyclization reaction of the C ring. The lactamase-like protein GME11357 (or other beta-lactamases in Pestalotiopsis microspora) probably hydrolyzes the thioester bond between the ACP of pks8/GME11356 and the intermediate to release atrochrysone carboxylic acid, which is spontaneously dehydrates to form endocrocin anthrone. Endocrocin anthrone is further converted to emodin via the endocrocin intermediate. Emodin is then oxidized by several enzymes such as the Baeyer-Villiger oxidase GME11358, the oxidoreductase GME11367, the short chain dehydrogenase/reductase GME11373, as well as by other oxidoreductases from the cluster, to modify the A and C rings and open the B ring, and finally yield monodictyphenone. The prenyltransferase GME11375 may catalyze the addition reaction between the C5 side chains and the carbon bone of dibenzodioxocinones. The remaining biochemical reactions to the final product dibenzodioxocinones should be methylation catalyzed by methyltransferase GME11366 and reduction and lactonization reaction catalyzed by a series of oxidordeuctases. This Pestalotiopsis microspora protein is Short-chain dehydrogenase/reductase GME11373.